The primary structure comprises 414 residues: ORC1-type DNA replication protein 11 (414 aa).

ATP contacts are provided by residues 60–64 (VGKTA), Tyr207, and Arg219.

The protein belongs to the CDC6/cdc18 family.

In terms of biological role, involved in regulation of DNA replication. This Haloarcula marismortui (strain ATCC 43049 / DSM 3752 / JCM 8966 / VKM B-1809) (Halobacterium marismortui) protein is ORC1-type DNA replication protein 11 (cdc6k).